A 483-amino-acid polypeptide reads, in one-letter code: Glutamyl-tRNA(Gln) amidotransferase subunit A (483 aa).

Residues lysine 76 and serine 151 each act as charge relay system in the active site. Serine 175 (acyl-ester intermediate) is an active-site residue.

Belongs to the amidase family. GatA subfamily. In terms of assembly, heterotrimer of A, B and C subunits.

It carries out the reaction L-glutamyl-tRNA(Gln) + L-glutamine + ATP + H2O = L-glutaminyl-tRNA(Gln) + L-glutamate + ADP + phosphate + H(+). Functionally, allows the formation of correctly charged Gln-tRNA(Gln) through the transamidation of misacylated Glu-tRNA(Gln) in organisms which lack glutaminyl-tRNA synthetase. The reaction takes place in the presence of glutamine and ATP through an activated gamma-phospho-Glu-tRNA(Gln). The sequence is that of Glutamyl-tRNA(Gln) amidotransferase subunit A from Pseudomonas fluorescens (strain ATCC BAA-477 / NRRL B-23932 / Pf-5).